The sequence spans 119 residues: MPLVVAVIFFSLWVFALGQLEQPEISISRPANKSAHISWKASIQGFSSKIIHWYWQKPNKGLEYLLHVFLTISAQDCSGGKTKKLEVSKNAHTSTSTLKIKFLEKEDEVVYHCACWIRH.

Residues 1-18 (MPLVVAVIFFSLWVFALG) form the signal peptide. In terms of domain architecture, Ig-like spans 23–119 (PEISISRPAN…VYHCACWIRH (97 aa)). N-linked (GlcNAc...) asparagine glycosylation is present at Asn32.

Most probably, the gamma-delta TR is not assembled due to incorrect folding of the gamma chain. Gamma-delta TR is a heterodimer composed of a gamma and delta chain; disulfide-linked. The gamma-delta TR is associated with the transmembrane signaling CD3 coreceptor proteins following the stoichiometry: a single gamma-delta TR heterodimer associates with one CD3D-CD3E heterodimer, one CD3G-CD3E heterodimer and one CD247 homodimer forming a stable octameric structure. Upon activation, gamma-delta TR complex associates with FCER1G to initiate intracellular signaling.

It is found in the cell membrane. Probable non-functional open reading frame (ORF) of V region of the variable domain of T cell receptor (TR) gamma chain. Non-functional ORF generally cannot participate in the synthesis of a productive T cell receptor (TR) chain due to altered V-(D)-J or switch recombination and/or splicing site (at mRNA level) and/or conserved amino acid change (protein level). Gamma-delta TRs recognize a variety of self and foreign non-peptide antigens frequently expressed at the epithelial boundaries between the host and external environment, including endogenous lipids presented by MH-like protein CD1D and phosphoantigens presented by butyrophilin-like molecule BTN3A1. Upon antigen recognition induces rapid, innate-like immune responses involved in pathogen clearance and tissue repair. Binding of gamma-delta TR complex to antigen triggers phosphorylation of immunoreceptor tyrosine-based activation motifs (ITAMs) in the CD3 chains by the LCK and FYN kinases, allowing the recruitment, phosphorylation, and activation of ZAP70 that facilitates phosphorylation of the scaffolding proteins LCP2 and LAT. This lead to the formation of a supramolecular signalosome that recruits the phospholipase PLCG1, resulting in calcium mobilization and ERK activation, ultimately leading to T cell expansion and differentiation into effector cells. Gamma-delta TRs are produced through somatic rearrangement of a limited repertoire of variable (V), diversity (D), and joining (J) genes. The potential diversity of gamma-delta TRs is conferred by the unique ability to rearrange (D) genes in tandem and to utilize all three reading frames. The combinatorial diversity is considerably increased by the sequence exonuclease trimming and random nucleotide (N) region additions which occur during the V-(D)-J rearrangements. In Homo sapiens (Human), this protein is Probable non-functional T cell receptor gamma variable 11.